The primary structure comprises 274 residues: Phosphatidylglycerol--prolipoprotein diacylglyceryl transferase (274 aa).

Transmembrane regions (helical) follow at residues 24-44 (WYAL…RFLS), 60-80 (LLVW…VVFY), 96-116 (WHGG…TVLF), and 122-142 (LSVA…LFFG). Arg-143 serves as a coordination point for a 1,2-diacyl-sn-glycero-3-phospho-(1'-sn-glycerol). Helical transmembrane passes span 182–202 (ATLE…FTAL), 207–227 (GQII…AEFF), and 241–261 (VTMG…VFVV).

Belongs to the Lgt family.

Its subcellular location is the cell inner membrane. The catalysed reaction is L-cysteinyl-[prolipoprotein] + a 1,2-diacyl-sn-glycero-3-phospho-(1'-sn-glycerol) = an S-1,2-diacyl-sn-glyceryl-L-cysteinyl-[prolipoprotein] + sn-glycerol 1-phosphate + H(+). It functions in the pathway protein modification; lipoprotein biosynthesis (diacylglyceryl transfer). Catalyzes the transfer of the diacylglyceryl group from phosphatidylglycerol to the sulfhydryl group of the N-terminal cysteine of a prolipoprotein, the first step in the formation of mature lipoproteins. This Rhodospirillum rubrum (strain ATCC 11170 / ATH 1.1.1 / DSM 467 / LMG 4362 / NCIMB 8255 / S1) protein is Phosphatidylglycerol--prolipoprotein diacylglyceryl transferase.